The chain runs to 237 residues: Protein GrpE (237 aa).

Disordered stretches follow at residues 1–52 (MSGD…RLQQ) and 200–237 (KVSMGPGPQSGASPSSAQSNDDSTATFQGEADPAEPGV). Polar residues predominate over residues 27–40 (ASMNSDEGQPSAQS). Low complexity predominate over residues 204–218 (GPGPQSGASPSSAQS).

The protein belongs to the GrpE family. Homodimer.

Its subcellular location is the cytoplasm. In terms of biological role, participates actively in the response to hyperosmotic and heat shock by preventing the aggregation of stress-denatured proteins, in association with DnaK and GrpE. It is the nucleotide exchange factor for DnaK and may function as a thermosensor. Unfolded proteins bind initially to DnaJ; upon interaction with the DnaJ-bound protein, DnaK hydrolyzes its bound ATP, resulting in the formation of a stable complex. GrpE releases ADP from DnaK; ATP binding to DnaK triggers the release of the substrate protein, thus completing the reaction cycle. Several rounds of ATP-dependent interactions between DnaJ, DnaK and GrpE are required for fully efficient folding. The protein is Protein GrpE of Prochlorococcus marinus (strain MIT 9303).